The primary structure comprises 410 residues: Imidazolonepropionase (410 aa).

The Fe(3+) site is built by histidine 73 and histidine 75. Zn(2+) contacts are provided by histidine 73 and histidine 75. Residues arginine 82, tyrosine 145, and histidine 178 each contribute to the 4-imidazolone-5-propanoate site. An N-formimidoyl-L-glutamate-binding site is contributed by tyrosine 145. Histidine 243 contacts Fe(3+). Residue histidine 243 participates in Zn(2+) binding. Glutamine 246 serves as a coordination point for 4-imidazolone-5-propanoate. Fe(3+) is bound at residue aspartate 318. Aspartate 318 contacts Zn(2+). 2 residues coordinate N-formimidoyl-L-glutamate: asparagine 320 and glycine 322. 4-imidazolone-5-propanoate is bound at residue serine 323.

It belongs to the metallo-dependent hydrolases superfamily. HutI family. Requires Zn(2+) as cofactor. The cofactor is Fe(3+).

The protein localises to the cytoplasm. The catalysed reaction is 4-imidazolone-5-propanoate + H2O = N-formimidoyl-L-glutamate. It functions in the pathway amino-acid degradation; L-histidine degradation into L-glutamate; N-formimidoyl-L-glutamate from L-histidine: step 3/3. Functionally, catalyzes the hydrolytic cleavage of the carbon-nitrogen bond in imidazolone-5-propanoate to yield N-formimidoyl-L-glutamate. It is the third step in the universal histidine degradation pathway. In Shewanella frigidimarina (strain NCIMB 400), this protein is Imidazolonepropionase.